Reading from the N-terminus, the 288-residue chain is Aquaporin PIP2-4 (288 aa).

Positions 1 to 24 (MAKDIEASGPEAGEFSAKDYTDPP) are disordered. A run of 2 helical transmembrane segments spans residues 42 to 62 (AVIAEFIATLLFLYITVATVI) and 79 to 99 (CGGVGILGIAWAFGGMIFILV). The NPA 1 signature appears at 111-113 (NPA). 3 consecutive transmembrane segments (helical) span residues 130–150 (LLYIIAQCLGAICGVGLVKGF), 172–192 (GTGLAAEIIGTFVLVYTVFSA), and 206–226 (VLAPLPIGFAVFMVHLATIPI). Residues 232-234 (NPA) carry the NPA 2 motif. Residues 254–274 (IFWVGPLIGAAIAAAYHQYVL) traverse the membrane as a helical segment.

This sequence belongs to the MIP/aquaporin (TC 1.A.8) family. PIP (TC 1.A.8.11) subfamily. Homomers. May interact with PIP1-2 to form heteromers. In terms of tissue distribution, expressed in the root growing zone at 5-6 mm from the root tip.

It localises to the cell membrane. Water channel required to facilitate the transport of water across cell membrane. Active as homomers. Increased activity when heteromerization with PIP1-2. In Zea mays (Maize), this protein is Aquaporin PIP2-4 (PIP2-4).